The following is a 252-amino-acid chain: Ditrans,polycis-undecaprenyl-diphosphate synthase ((2E,6E)-farnesyl-diphosphate specific) (252 aa).

Aspartate 25 is an active-site residue. A Mg(2+)-binding site is contributed by aspartate 25. Residues 26 to 29 (GNGR), tryptophan 30, arginine 38, histidine 42, and 70 to 72 (SSE) contribute to the substrate site. Asparagine 73 serves as the catalytic Proton acceptor. Tryptophan 74, arginine 76, and arginine 193 together coordinate substrate. Histidine 198 contributes to the Mg(2+) binding site. 199-201 (RIS) provides a ligand contact to substrate. Glutamate 212 provides a ligand contact to Mg(2+).

It belongs to the UPP synthase family. Homodimer. The cofactor is Mg(2+).

It catalyses the reaction 8 isopentenyl diphosphate + (2E,6E)-farnesyl diphosphate = di-trans,octa-cis-undecaprenyl diphosphate + 8 diphosphate. Catalyzes the sequential condensation of isopentenyl diphosphate (IPP) with (2E,6E)-farnesyl diphosphate (E,E-FPP) to yield (2Z,6Z,10Z,14Z,18Z,22Z,26Z,30Z,34E,38E)-undecaprenyl diphosphate (di-trans,octa-cis-UPP). UPP is the precursor of glycosyl carrier lipid in the biosynthesis of bacterial cell wall polysaccharide components such as peptidoglycan and lipopolysaccharide. The protein is Ditrans,polycis-undecaprenyl-diphosphate synthase ((2E,6E)-farnesyl-diphosphate specific) of Salmonella typhi.